A 1034-amino-acid polypeptide reads, in one-letter code: Error-prone DNA polymerase (1034 aa).

Belongs to the DNA polymerase type-C family. DnaE2 subfamily.

It is found in the cytoplasm. It catalyses the reaction DNA(n) + a 2'-deoxyribonucleoside 5'-triphosphate = DNA(n+1) + diphosphate. Its function is as follows. DNA polymerase involved in damage-induced mutagenesis and translesion synthesis (TLS). It is not the major replicative DNA polymerase. The chain is Error-prone DNA polymerase from Pseudomonas fluorescens (strain ATCC BAA-477 / NRRL B-23932 / Pf-5).